We begin with the raw amino-acid sequence, 129 residues long: UPF0325 protein PC1_0937 (129 aa).

The protein belongs to the UPF0325 family.

This Pectobacterium carotovorum subsp. carotovorum (strain PC1) protein is UPF0325 protein PC1_0937.